The chain runs to 332 residues: Cysteine and histidine-rich domain-containing protein 1 (332 aa).

A2 carries the N-acetylalanine modification. Residues 2-77 (ALLCYNRGCG…KPPEPVKPEV (76 aa)) are interaction with PPP5C. Positions 5, 10, 24, 27, 42, and 43 each coordinate Zn(2+). 2 CHORD domains span residues 5 to 64 (CYNR…KGRH) and 157 to 216 (CKNG…TGKH). Phosphothreonine is present on T47. S51 is modified (phosphoserine). Positions 59, 64, 157, 162, 176, 179, 194, 195, 211, and 216 each coordinate Zn(2+). A disordered region spans residues 62 to 82 (GRHNSEKPPEPVKPEVKTTEK). Residues 64–82 (HNSEKPPEPVKPEVKTTEK) are compositionally biased toward basic and acidic residues. The segment at 65 to 316 (NSEKPPEPVK…AEPMQWASLE (252 aa)) is interaction with HSP90AA1 and HSP90AB1. In terms of domain architecture, CS spans 227-316 (VVPCRHDWHQ…AEPMQWASLE (90 aa)).

Interacts with HSP90AA1, HSP90AB1, PPP5C, ROCK1 and ROCK2.

Its function is as follows. Regulates centrosome duplication, probably by inhibiting the kinase activity of ROCK2. Proposed to act as co-chaperone for HSP90. May play a role in the regulation of NOD1 via a HSP90 chaperone complex. In vitro, has intrinsic chaperone activity. This function may be achieved by inhibiting association of ROCK2 with NPM1. Plays a role in ensuring the localization of the tyrosine kinase receptor EGFR to the plasma membrane, and thus ensures the subsequent regulation of EGFR activity and EGF-induced actin cytoskeleton remodeling. Involved in stress response. Prevents tumorigenesis. The polypeptide is Cysteine and histidine-rich domain-containing protein 1 (CHORDC1) (Bos taurus (Bovine)).